The chain runs to 426 residues: Glutamate-1-semialdehyde 2,1-aminomutase (426 aa).

Lys265 carries the N6-(pyridoxal phosphate)lysine modification.

Belongs to the class-III pyridoxal-phosphate-dependent aminotransferase family. HemL subfamily. As to quaternary structure, homodimer. Pyridoxal 5'-phosphate serves as cofactor.

The protein resides in the cytoplasm. It catalyses the reaction (S)-4-amino-5-oxopentanoate = 5-aminolevulinate. It functions in the pathway porphyrin-containing compound metabolism; protoporphyrin-IX biosynthesis; 5-aminolevulinate from L-glutamyl-tRNA(Glu): step 2/2. The polypeptide is Glutamate-1-semialdehyde 2,1-aminomutase (Methylococcus capsulatus (strain ATCC 33009 / NCIMB 11132 / Bath)).